Consider the following 279-residue polypeptide: Movement protein (279 aa).

Positions 246 to 279 (SESEELNVESPPAAIGSSSASRSEAFRPQVVNGL) are disordered. Over residues 254-268 (ESPPAAIGSSSASRS) the composition is skewed to low complexity.

This sequence belongs to the cucumovirus movement protein family.

The protein resides in the host cell junction. It localises to the host plasmodesma. In terms of biological role, transports viral genome to neighboring plant cells directly through plasmosdesmata, without any budding. The movement protein allows efficient cell to cell propagation, by bypassing the host cell wall barrier. Acts by forming a tubular structure at the host plasmodesmata, enlarging it enough to allow free passage of virion capsids. The polypeptide is Movement protein (Cucumber mosaic virus (strain CS) (CMV)).